The chain runs to 188 residues: Protein-arginine kinase activator protein (188 aa).

4 consecutive short sequence motifs (CXXC metal binding motif) follow at residues 3 to 6 (CENC), 29 to 32 (CQTC), 87 to 90 (CPSC), and 105 to 108 (CANC). Residues 145 to 180 (KRKIEEKNEYLKKLIEIQDFEEAAIVRDEIKALKAE) enclose the UVR domain.

Interacts with McsB and CtsR; the CXXC motifs are needed for the binding.

Activates the phosphorylation activity of the protein-arginine kinase McsB. May function as an important molecule for oxidative tolerance in various types of stress including that of heavy metals. Binds to Cu(2+), Zn(2+), Co(2+) and Cd(2+) via its CXXC metal binding motifs. This is Protein-arginine kinase activator protein from Staphylococcus aureus (strain NCTC 8325 / PS 47).